Consider the following 408-residue polypeptide: S-adenosylmethionine synthase (408 aa).

Residue His15 participates in ATP binding. Asp17 provides a ligand contact to Mg(2+). A K(+)-binding site is contributed by Glu43. L-methionine contacts are provided by Glu56 and Gln100. The interval 100–110 (QSPDIAQGVNE) is flexible loop. ATP is bound by residues 171-173 (DGK), 248-249 (KF), Asp257, 263-264 (RK), Ala280, and Lys284. Asp257 is a binding site for L-methionine. L-methionine is bound at residue Lys288.

It belongs to the AdoMet synthase family. In terms of assembly, homotetramer; dimer of dimers. Mg(2+) is required as a cofactor. Requires K(+) as cofactor.

The protein localises to the cytoplasm. It carries out the reaction L-methionine + ATP + H2O = S-adenosyl-L-methionine + phosphate + diphosphate. The protein operates within amino-acid biosynthesis; S-adenosyl-L-methionine biosynthesis; S-adenosyl-L-methionine from L-methionine: step 1/1. Functionally, catalyzes the formation of S-adenosylmethionine (AdoMet) from methionine and ATP. The overall synthetic reaction is composed of two sequential steps, AdoMet formation and the subsequent tripolyphosphate hydrolysis which occurs prior to release of AdoMet from the enzyme. The polypeptide is S-adenosylmethionine synthase (Synechococcus sp. (strain CC9902)).